A 304-amino-acid polypeptide reads, in one-letter code: MQNGKIKPENLLRRSPTNRKLTTGCEILDGCLRGGISCDSLTEIVAESGCGKTQLCLQLSLCTQLPISHGGLNGSSLYLHSEFPFPFRRLHQLSHTFHQSNPSIYANYNDNPCDHVFVQNVHSVDHLFDIMPRIDGFVGNSKTRFPLKLIVLDSVAALFRSEFDNTPSDLKKRSSLFFKISGKLKQLASKFDLAIVITNQVTDLVETSDGLSGLRIGNLRYLYSSGRRVVPSLGLAWANCVNSRFFISRSDGSIVKDRSEKDENCSSSVSRSAKRRLDIVFSPYLPGSSCEFMITREGICAVQA.

46–53 (AESGCGKT) is a binding site for ATP.

It belongs to the RecA family. RAD51 subfamily. Interacts with RAD51C. Detected in various tissues. More expressed in reproductive tissues than in vegetative tissues, with the highest level in young flower buds.

It localises to the nucleus. In terms of biological role, plays essential roles in DNA damage repair in both somatic and meiotic cells. It is important for postsynaptic events following pachytene in meiosis. It is also required for DNA cross-links repair and is involved in double strand breaks (DSBs) repair. This is DNA repair protein XRCC3 homolog (XRCC3) from Arabidopsis thaliana (Mouse-ear cress).